Consider the following 418-residue polypeptide: Oxalate:formate antiporter (418 aa).

Transmembrane regions (helical) follow at residues 17–37 (WFYL…QYSW), 48–68 (LGVS…IQAG), 84–104 (IPLM…GMVD), 108–128 (ALYA…GIAM), 141–161 (LASG…LPLI), 172–192 (AAFM…AFVI), 222–242 (FWVL…LVAN), 250–270 (LGLA…FNGG), 288–308 (MSVV…IAAL), 311–331 (VAFI…YALF), 350–370 (FFWA…AAIA), and 378–398 (AFLI…FVIP). Lys355 serves as a coordination point for oxalate.

It belongs to the major facilitator superfamily. OFA (TC 2.A.1.11) family. As to quaternary structure, monomer.

It is found in the cell inner membrane. Functionally, anion transporter that carries out the exchange of divalent oxalate with monovalent formate, the product of oxalate decarboxylation, at the plasma membrane, and in doing so catalyzes the vectorial portion of a proton-motive metabolic cycle that drives ATP synthesis. This Oxalobacter formigenes protein is Oxalate:formate antiporter (oxlT).